The primary structure comprises 151 residues: MSTSARRRLMRDFKRMQTDPPAGVSASPVADNVMTWNAVIIGPADTPFEDGTFRLVMHFEEQYPNKPPGVKFISQMFHPNVYGTGELCLDILQNRWSPTYDVAAILTSIQSLLNDPNTSSPANVEASNLYRDNRKEYIKRVRETVEKSWEE.

Residues 1-26 form a disordered region; sequence MSTSARRRLMRDFKRMQTDPPAGVSA. Residues 4–150 form the UBC core domain; it reads SARRRLMRDF…VRETVEKSWE (147 aa). Cys-88 acts as the Glycyl thioester intermediate in catalysis.

The protein belongs to the ubiquitin-conjugating enzyme family.

Its subcellular location is the cytoplasm. The protein localises to the nucleus. The enzyme catalyses S-ubiquitinyl-[E1 ubiquitin-activating enzyme]-L-cysteine + [E2 ubiquitin-conjugating enzyme]-L-cysteine = [E1 ubiquitin-activating enzyme]-L-cysteine + S-ubiquitinyl-[E2 ubiquitin-conjugating enzyme]-L-cysteine.. It functions in the pathway protein modification; protein ubiquitination. Catalyzes the covalent attachment of ubiquitin to other proteins. Plays a role in transcription regulation by catalyzing the monoubiquitination of histone H2B to form H2BK123ub1. H2BK123ub1 gives a specific tag for epigenetic transcriptional activation and is also a prerequisite for H3K4me and H3K79me formation. Also involved in postreplication repair of UV-damaged DNA, in N-end rule-dependent protein degradation and in sporulation. The polypeptide is Ubiquitin-conjugating enzyme E2 2 (uvsJ) (Emericella nidulans (strain FGSC A4 / ATCC 38163 / CBS 112.46 / NRRL 194 / M139) (Aspergillus nidulans)).